The primary structure comprises 129 residues: uncharacterized protein (129 aa).

Residues 91–114 (ASEKVGEMKEAASEKASEMKEAVS) are compositionally biased toward basic and acidic residues. The segment at 91 to 129 (ASEKVGEMKEAASEKASEMKEAVSEKATQAVDAVKEATK) is disordered.

This sequence belongs to the LEA type 1 family.

This is an uncharacterized protein from Haemophilus influenzae (strain ATCC 51907 / DSM 11121 / KW20 / Rd).